Reading from the N-terminus, the 253-residue chain is Testis-expressed protein 47 (253 aa).

Testis-specific.

The protein is Testis-expressed protein 47 of Homo sapiens (Human).